The following is a 100-amino-acid chain: Osteocalcin (100 aa).

Positions 1–23 (MRALTLLALLALAALCITGQAGA) are cleaved as a signal peptide. The propeptide occupies 24–51 (KPSGADSSKGAAFVSKQEGSEVVKRPRR). Positions 52–98 (YLYQWLGAPVPYPDPLEPKREVCELNPDCDELADHIGFQEAYRRFYG) constitute a Gla domain. Positions 68, 72, 75, and 81 each coordinate Ca(2+). Residues E68, E72, and E75 each carry the 4-carboxyglutamate modification. C74 and C80 are disulfide-bonded.

The protein belongs to the osteocalcin/matrix Gla protein family. In terms of processing, gamma-carboxyglutamate residues are formed by vitamin K dependent carboxylation by GGCX. These residues are essential for the binding of calcium. Decarboxylation promotes the hormone activity.

The protein localises to the secreted. The carboxylated form is one of the main organic components of the bone matrix, which constitutes 1-2% of the total bone protein: it acts as a negative regulator of bone formation and is required to limit bone formation without impairing bone resorption or mineralization. The carboxylated form binds strongly to apatite and calcium. Functionally, the uncarboxylated form acts as a hormone secreted by osteoblasts, which regulates different cellular processes, such as energy metabolism, male fertility and brain development. Regulates of energy metabolism by acting as a hormone favoring pancreatic beta-cell proliferation, insulin secretion and sensitivity and energy expenditure. Uncarboxylated osteocalcin hormone also promotes testosterone production in the testes: acts as a ligand for G protein-coupled receptor GPRC6A at the surface of Leydig cells, initiating a signaling response that promotes the expression of enzymes required for testosterone synthesis in a CREB-dependent manner. Also acts as a regulator of brain development: osteocalcin hormone crosses the blood-brain barrier and acts as a ligand for GPR158 on neurons, initiating a signaling response that prevents neuronal apoptosis in the hippocampus, favors the synthesis of all monoamine neurotransmitters and inhibits that of gamma-aminobutyric acid (GABA). Osteocalcin also crosses the placenta during pregnancy and maternal osteocalcin is required for fetal brain development. In Pongo pygmaeus (Bornean orangutan), this protein is Osteocalcin.